A 227-amino-acid chain; its full sequence is MAYPFQLGLQDATSPIMEELTNFHDHTLMIVFLISSLVLYIISSMLATKMTHTSTMDAQSMETIWTILPAVILVLIALPSLRILYMMDEINNPVLTVKTMGHQWYWSYEYTDYEDLCFDSYMVPTNDLKPGELRLLEVDNRVVLPMELPIRMLISSEDVLHSWAVPSLGLKTDAIPGRLNQATVSSNRPGLFYGQCSEICGSNHSFMPIVLEMVPLKFFENWSASMI.

Topologically, residues 1-14 are mitochondrial intermembrane; it reads MAYPFQLGLQDATS. Residues 15–45 form a helical membrane-spanning segment; sequence PIMEELTNFHDHTLMIVFLISSLVLYIISSM. Residues 46–59 are Mitochondrial matrix-facing; that stretch reads LATKMTHTSTMDAQ. Residues 60 to 87 form a helical membrane-spanning segment; the sequence is SMETIWTILPAVILVLIALPSLRILYMM. Residues 88–227 are Mitochondrial intermembrane-facing; sequence DEINNPVLTV…FFENWSASMI (140 aa). Residues His-161, Cys-196, Glu-198, Cys-200, His-204, and Met-207 each contribute to the Cu cation site. Residue Glu-198 coordinates Mg(2+).

It belongs to the cytochrome c oxidase subunit 2 family. Component of the cytochrome c oxidase (complex IV, CIV), a multisubunit enzyme composed of 14 subunits. The complex is composed of a catalytic core of 3 subunits MT-CO1, MT-CO2 and MT-CO3, encoded in the mitochondrial DNA, and 11 supernumerary subunits COX4I, COX5A, COX5B, COX6A, COX6B, COX6C, COX7A, COX7B, COX7C, COX8 and NDUFA4, which are encoded in the nuclear genome. The complex exists as a monomer or a dimer and forms supercomplexes (SCs) in the inner mitochondrial membrane with NADH-ubiquinone oxidoreductase (complex I, CI) and ubiquinol-cytochrome c oxidoreductase (cytochrome b-c1 complex, complex III, CIII), resulting in different assemblies (supercomplex SCI(1)III(2)IV(1) and megacomplex MCI(2)III(2)IV(2)). Found in a complex with TMEM177, COA6, COX18, COX20, SCO1 and SCO2. Interacts with TMEM177 in a COX20-dependent manner. Interacts with COX20. Interacts with COX16. Requires Cu cation as cofactor.

Its subcellular location is the mitochondrion inner membrane. It catalyses the reaction 4 Fe(II)-[cytochrome c] + O2 + 8 H(+)(in) = 4 Fe(III)-[cytochrome c] + 2 H2O + 4 H(+)(out). Its function is as follows. Component of the cytochrome c oxidase, the last enzyme in the mitochondrial electron transport chain which drives oxidative phosphorylation. The respiratory chain contains 3 multisubunit complexes succinate dehydrogenase (complex II, CII), ubiquinol-cytochrome c oxidoreductase (cytochrome b-c1 complex, complex III, CIII) and cytochrome c oxidase (complex IV, CIV), that cooperate to transfer electrons derived from NADH and succinate to molecular oxygen, creating an electrochemical gradient over the inner membrane that drives transmembrane transport and the ATP synthase. Cytochrome c oxidase is the component of the respiratory chain that catalyzes the reduction of oxygen to water. Electrons originating from reduced cytochrome c in the intermembrane space (IMS) are transferred via the dinuclear copper A center (CU(A)) of subunit 2 and heme A of subunit 1 to the active site in subunit 1, a binuclear center (BNC) formed by heme A3 and copper B (CU(B)). The BNC reduces molecular oxygen to 2 water molecules using 4 electrons from cytochrome c in the IMS and 4 protons from the mitochondrial matrix. The sequence is that of Cytochrome c oxidase subunit 2 (MT-CO2) from Acomys wilsoni (Wilson's spiny mouse).